A 106-amino-acid polypeptide reads, in one-letter code: Cell division protein FtsL (106 aa).

The Cytoplasmic portion of the chain corresponds to 1–22 (MPRQSPPNLAKLIALDLLTVGR). The helical transmembrane segment at 23–43 (VPLLLLVLIFSCAMGVVFMTH) threads the bilayer. Residues 44 to 106 (HTRQAISAKD…SDKEVVINLK (63 aa)) lie on the Periplasmic side of the membrane.

It belongs to the FtsL family. As to quaternary structure, part of a complex composed of FtsB, FtsL and FtsQ.

The protein localises to the cell inner membrane. Its function is as follows. Essential cell division protein. May link together the upstream cell division proteins, which are predominantly cytoplasmic, with the downstream cell division proteins, which are predominantly periplasmic. The polypeptide is Cell division protein FtsL (Vibrio cholerae serotype O1 (strain ATCC 39315 / El Tor Inaba N16961)).